A 561-amino-acid chain; its full sequence is Putative pectinesterase/pectinesterase inhibitor 24 (561 aa).

The chain crosses the membrane as a helical span at residues 26 to 46 (IAIIAVSLVILAGIVIGAVFG). The pectinesterase inhibitor 24 stretch occupies residues 64 to 211 (DSISVSVKAV…TELTSNALAI (148 aa)). Asn92, Asn130, Asn148, and Asn200 each carry an N-linked (GlcNAc...) asparagine glycan. Residues 255 to 548 (DIVVAKDGSG…TVKPFIDGGR (294 aa)) are pectinesterase 24. Substrate-binding residues include Thr330 and Gln360. The active-site Proton donor; for pectinesterase activity is Asp383. A disulfide bond links Cys397 and Cys417. Residue Asp404 is the Nucleophile; for pectinesterase activity of the active site. The substrate site is built by Arg468 and Trp470. N-linked (GlcNAc...) asparagine glycosylation is present at Asn472.

In the N-terminal section; belongs to the PMEI family. This sequence in the C-terminal section; belongs to the pectinesterase family.

Its subcellular location is the membrane. The enzyme catalyses [(1-&gt;4)-alpha-D-galacturonosyl methyl ester](n) + n H2O = [(1-&gt;4)-alpha-D-galacturonosyl](n) + n methanol + n H(+). Its pathway is glycan metabolism; pectin degradation; 2-dehydro-3-deoxy-D-gluconate from pectin: step 1/5. In terms of biological role, acts in the modification of cell walls via demethylesterification of cell wall pectin. This is Putative pectinesterase/pectinesterase inhibitor 24 (PME24) from Arabidopsis thaliana (Mouse-ear cress).